Reading from the N-terminus, the 677-residue chain is Mitochondrial disaggregase (677 aa).

The transit peptide at 1-28 directs the protein to the mitochondrion; that stretch reads MLGSLVSKRTAPAPRLLLQLLRSPSLRS. Residues 92–126 form an autoinhibitory region; the sequence is PSPEDTLPGQDSWNGVLSRAGLGVWALATALVVHC. ANK repeat units follow at residues 133–162, 166–195, 235–265, and 268–297; these read SKDA…DVNA, LGWT…DPNL, KGCT…PLQR, and MGHT…EKQR. Residues histidine 316, isoleucine 318, serine 353, glycine 354, isoleucine 355, glycine 356, lysine 357, threonine 358, glutamate 425, and asparagine 466 each contribute to the ATP site. Residues 477 to 505 form a regulatory; slows ATPase and disaggregase activities region; that stretch reads LQLRQEALEMSRNRIAENLGDVQISDKIT. ATP is bound at residue arginine 531. The residue at position 559 (lysine 559) is an N6-acetyllysine. Residue arginine 590 coordinates ATP.

Belongs to the ClpA/ClpB family. In terms of assembly, homododecamer when substrate-bound; the homododecamer consists of 2 homohexamers stacked head-to-head via ANK repeat-mediated interactions. The active substrate-bound form is likely to exist in a dynamic equilibrium between homohexamers and homododecamers. Homotetradecamer in the unbound state which is remodeled upon substrate binding into the homododecamer. Interacts with PHB and PHB2. Interacts with MAVS; the interaction is enhanced by Sendai virus infection. In terms of processing, proteolytically cleaved by protease PARL. ATP-dependent protein disaggregase activity is stimulated by PARL-mediated cleavage of the N-terminal autoinhibitory peptide.

The protein localises to the mitochondrion intermembrane space. The catalysed reaction is ATP + H2O = ADP + phosphate + H(+). Disaggregase activity is inhibited by ADP. Functionally, functions as a regulatory ATPase and participates in secretion/protein trafficking process. Has ATP-dependent protein disaggregase activity and is required to maintain the solubility of key mitochondrial proteins. Involved in mitochondrial-mediated antiviral innate immunity, activates RIG-I-mediated signal transduction and production of IFNB1 and pro-inflammatory cytokine IL6. Plays a role in granulocyte differentiation. In Bos taurus (Bovine), this protein is Mitochondrial disaggregase.